Here is a 427-residue protein sequence, read N- to C-terminus: Glutamate-1-semialdehyde 2,1-aminomutase (427 aa).

Position 265 is an N6-(pyridoxal phosphate)lysine (Lys-265).

This sequence belongs to the class-III pyridoxal-phosphate-dependent aminotransferase family. HemL subfamily. In terms of assembly, homodimer. Pyridoxal 5'-phosphate serves as cofactor.

It localises to the cytoplasm. It catalyses the reaction (S)-4-amino-5-oxopentanoate = 5-aminolevulinate. It functions in the pathway porphyrin-containing compound metabolism; protoporphyrin-IX biosynthesis; 5-aminolevulinate from L-glutamyl-tRNA(Glu): step 2/2. The protein is Glutamate-1-semialdehyde 2,1-aminomutase of Burkholderia orbicola (strain MC0-3).